Here is a 112-residue protein sequence, read N- to C-terminus: 2Fe-2S ferredoxin (112 aa).

Residues 5-107 (IKVTFIINDE…GIKVRLPSAT (103 aa)) form the 2Fe-2S ferredoxin-type domain. Residues cysteine 42, cysteine 48, cysteine 51, and cysteine 88 each contribute to the [2Fe-2S] cluster site.

This sequence belongs to the adrenodoxin/putidaredoxin family. [2Fe-2S] cluster is required as a cofactor.

Ferredoxin are iron-sulfur proteins that transfer electrons in a wide variety of metabolic reactions. This Rickettsia prowazekii (strain Madrid E) protein is 2Fe-2S ferredoxin (fdxB).